A 451-amino-acid chain; its full sequence is 23S rRNA (uracil(1939)-C(5))-methyltransferase RlmD (451 aa).

The 59-residue stretch at 20–78 folds into the TRAM domain; it reads QIPAGKKQRLTIERLSDDGRGIAFLEGKTWFVAGSLAGEEVEARVLNARGKVVEARTER. Residues cysteine 91, cysteine 97, cysteine 100, and cysteine 179 each contribute to the [4Fe-4S] cluster site. S-adenosyl-L-methionine-binding residues include glutamine 283, phenylalanine 312, asparagine 317, glutamate 333, aspartate 360, and aspartate 381. Cysteine 407 serves as the catalytic Nucleophile.

Belongs to the class I-like SAM-binding methyltransferase superfamily. RNA M5U methyltransferase family. RlmD subfamily.

The enzyme catalyses uridine(1939) in 23S rRNA + S-adenosyl-L-methionine = 5-methyluridine(1939) in 23S rRNA + S-adenosyl-L-homocysteine + H(+). Catalyzes the formation of 5-methyl-uridine at position 1939 (m5U1939) in 23S rRNA. In Pseudomonas savastanoi pv. phaseolicola (strain 1448A / Race 6) (Pseudomonas syringae pv. phaseolicola (strain 1448A / Race 6)), this protein is 23S rRNA (uracil(1939)-C(5))-methyltransferase RlmD.